A 469-amino-acid polypeptide reads, in one-letter code: ATP synthase subunit beta (469 aa).

156–163 (GGAGVGKT) contacts ATP.

It belongs to the ATPase alpha/beta chains family. In terms of assembly, F-type ATPases have 2 components, CF(1) - the catalytic core - and CF(0) - the membrane proton channel. CF(1) has five subunits: alpha(3), beta(3), gamma(1), delta(1), epsilon(1). CF(0) has three main subunits: a(1), b(2) and c(9-12). The alpha and beta chains form an alternating ring which encloses part of the gamma chain. CF(1) is attached to CF(0) by a central stalk formed by the gamma and epsilon chains, while a peripheral stalk is formed by the delta and b chains.

The protein resides in the cell membrane. The catalysed reaction is ATP + H2O + 4 H(+)(in) = ADP + phosphate + 5 H(+)(out). Functionally, produces ATP from ADP in the presence of a proton gradient across the membrane. The catalytic sites are hosted primarily by the beta subunits. This Bacillus cereus (strain AH820) protein is ATP synthase subunit beta.